Here is a 969-residue protein sequence, read N- to C-terminus: Bifunctional glutamine synthetase adenylyltransferase/adenylyl-removing enzyme (969 aa).

The adenylyl removase stretch occupies residues 1 to 456 (MNWQANIHKL…HFEQLFAAPH (456 aa)). The segment at 466–969 (EKRLAEVWLG…SALLEDESAK (504 aa)) is adenylyl transferase.

The protein belongs to the GlnE family. Requires Mg(2+) as cofactor.

It catalyses the reaction [glutamine synthetase]-O(4)-(5'-adenylyl)-L-tyrosine + phosphate = [glutamine synthetase]-L-tyrosine + ADP. The catalysed reaction is [glutamine synthetase]-L-tyrosine + ATP = [glutamine synthetase]-O(4)-(5'-adenylyl)-L-tyrosine + diphosphate. Functionally, involved in the regulation of glutamine synthetase GlnA, a key enzyme in the process to assimilate ammonia. When cellular nitrogen levels are high, the C-terminal adenylyl transferase (AT) inactivates GlnA by covalent transfer of an adenylyl group from ATP to specific tyrosine residue of GlnA, thus reducing its activity. Conversely, when nitrogen levels are low, the N-terminal adenylyl removase (AR) activates GlnA by removing the adenylyl group by phosphorolysis, increasing its activity. The regulatory region of GlnE binds the signal transduction protein PII (GlnB) which indicates the nitrogen status of the cell. This is Bifunctional glutamine synthetase adenylyltransferase/adenylyl-removing enzyme from Nitrosococcus oceani (strain ATCC 19707 / BCRC 17464 / JCM 30415 / NCIMB 11848 / C-107).